The primary structure comprises 149 residues: Ribonuclease pancreatic (149 aa).

The first 25 residues, 1 to 25 (MGLEKSFILFPLLILVLGWVQSSLG), serve as a signal peptide directing secretion. Residues Lys32 and Arg35 each coordinate substrate. The Proton acceptor role is filled by His37. 4 disulfides stabilise this stretch: Cys51-Cys109, Cys65-Cys120, Cys83-Cys135, and Cys90-Cys97. N-linked (GlcNAc...) asparagine glycosylation occurs at Asn59. Substrate is bound at residue 66 to 70 (KPVNT). A glycan (N-linked (GlcNAc...) asparagine) is linked at Asn87. Substrate-binding residues include Lys91 and Arg110. The active-site Proton donor is His144.

The protein belongs to the pancreatic ribonuclease family. As to quaternary structure, monomer. Interacts with and forms tight 1:1 complexes with RNH1. Dimerization of two such complexes may occur. Interaction with RNH1 inhibits this protein. In terms of tissue distribution, pancreas.

The protein resides in the secreted. It catalyses the reaction an [RNA] containing cytidine + H2O = an [RNA]-3'-cytidine-3'-phosphate + a 5'-hydroxy-ribonucleotide-3'-[RNA].. It carries out the reaction an [RNA] containing uridine + H2O = an [RNA]-3'-uridine-3'-phosphate + a 5'-hydroxy-ribonucleotide-3'-[RNA].. In terms of biological role, endonuclease that catalyzes the cleavage of RNA on the 3' side of pyrimidine nucleotides. Acts on single-stranded and double-stranded RNA. This Abrothrix jelskii (Jelski's altiplano mouse) protein is Ribonuclease pancreatic (RNASE1).